The sequence spans 275 residues: Shikimate dehydrogenase (NADP(+)) (275 aa).

Residues 19–21 and T66 each bind shikimate; that span reads SIS. K70 (proton acceptor) is an active-site residue. Residue E82 participates in NADP(+) binding. Shikimate is bound by residues N91 and D106. Residues 129–133, 153–158, and I219 each bind NADP(+); these read GAGGA and NRTYER. Y221 is a shikimate binding site. G242 contributes to the NADP(+) binding site.

Belongs to the shikimate dehydrogenase family. As to quaternary structure, homodimer.

It catalyses the reaction shikimate + NADP(+) = 3-dehydroshikimate + NADPH + H(+). It participates in metabolic intermediate biosynthesis; chorismate biosynthesis; chorismate from D-erythrose 4-phosphate and phosphoenolpyruvate: step 4/7. Its function is as follows. Involved in the biosynthesis of the chorismate, which leads to the biosynthesis of aromatic amino acids. Catalyzes the reversible NADPH linked reduction of 3-dehydroshikimate (DHSA) to yield shikimate (SA). This is Shikimate dehydrogenase (NADP(+)) from Dictyoglomus turgidum (strain DSM 6724 / Z-1310).